Reading from the N-terminus, the 72-residue chain is Translation initiation factor IF-1 (72 aa).

The S1-like domain maps to 1-72 (MAKEDVIEVE…TRGRITYRYK (72 aa)). The residue at position 60 (Tyr-60) is a Phosphotyrosine.

Belongs to the IF-1 family. Component of the 30S ribosomal translation pre-initiation complex which assembles on the 30S ribosome in the order IF-2 and IF-3, IF-1 and N-formylmethionyl-tRNA(fMet); mRNA recruitment can occur at any time during PIC assembly.

The protein resides in the cytoplasm. Its function is as follows. One of the essential components for the initiation of protein synthesis. Stabilizes the binding of IF-2 and IF-3 on the 30S subunit to which N-formylmethionyl-tRNA(fMet) subsequently binds. Helps modulate mRNA selection, yielding the 30S pre-initiation complex (PIC). Upon addition of the 50S ribosomal subunit IF-1, IF-2 and IF-3 are released leaving the mature 70S translation initiation complex. The polypeptide is Translation initiation factor IF-1 (Shouchella clausii (strain KSM-K16) (Alkalihalobacillus clausii)).